The following is a 157-amino-acid chain: 2-C-methyl-D-erythritol 2,4-cyclodiphosphate synthase (157 aa).

The a divalent metal cation site is built by Asp-9 and His-11. 4-CDP-2-C-methyl-D-erythritol 2-phosphate contacts are provided by residues 9–11 (DVH) and 35–36 (HS). An a divalent metal cation-binding site is contributed by His-43. 4-CDP-2-C-methyl-D-erythritol 2-phosphate-binding positions include 57-59 (DIG), 62-66 (FPDTD), 101-107 (AEKPKMA), 133-136 (TTTE), Phe-140, and Arg-143.

Belongs to the IspF family. In terms of assembly, homotrimer. A divalent metal cation serves as cofactor.

The enzyme catalyses 4-CDP-2-C-methyl-D-erythritol 2-phosphate = 2-C-methyl-D-erythritol 2,4-cyclic diphosphate + CMP. The protein operates within isoprenoid biosynthesis; isopentenyl diphosphate biosynthesis via DXP pathway; isopentenyl diphosphate from 1-deoxy-D-xylulose 5-phosphate: step 4/6. In terms of biological role, involved in the biosynthesis of isopentenyl diphosphate (IPP) and dimethylallyl diphosphate (DMAPP), two major building blocks of isoprenoid compounds. Catalyzes the conversion of 4-diphosphocytidyl-2-C-methyl-D-erythritol 2-phosphate (CDP-ME2P) to 2-C-methyl-D-erythritol 2,4-cyclodiphosphate (ME-CPP) with a corresponding release of cytidine 5-monophosphate (CMP). The chain is 2-C-methyl-D-erythritol 2,4-cyclodiphosphate synthase from Listeria innocua serovar 6a (strain ATCC BAA-680 / CLIP 11262).